The primary structure comprises 372 residues: Alpha-1-antitrypsin homolog (372 aa).

The first 19 residues, 1–19 (MPATCLLHTMLTLPSPSTR), serve as a signal peptide directing secretion. Residues N214 and N226 are each glycosylated (N-linked (GlcNAc...) asparagine). An RCL region spans residues 328-347 (AATTIEIMPMSLPDTVILNR).

Belongs to the serpin family.

The protein resides in the secreted. The sequence is that of Alpha-1-antitrypsin homolog from Cyprinus carpio (Common carp).